A 278-amino-acid chain; its full sequence is Replication protein A 32 kDa subunit B (278 aa).

The segment at residues 70–143 (VVIVGRISRM…RSVNVFSVRP (74 aa)) is a DNA-binding region (OB).

Belongs to the replication factor A protein 2 family. Heterotrimer of RPA1, RPA2 and RPA3 (canonical replication protein A complex). In terms of processing, phosphorylated in a cell-cycle-dependent manner (from the S phase until mitosis). In response to DNA damage, recruited to DNA-repair nuclear foci, as a hypophosphorylated form.

It localises to the nucleus. Functionally, component of the replication protein A complex (RPA) required for DNA recombination, repair and replication. The activity of RPA is mediated by single-stranded DNA binding and protein interactions. Required fo cell division in meristems. Involved in the maintenance of transcriptional epigenetic gene silencing (TGS) at specific loci (including some transposons) by regulating histone H3 acetylation, 'Lys-4' and 'Lys-9' methylation. In Arabidopsis thaliana (Mouse-ear cress), this protein is Replication protein A 32 kDa subunit B (RPA2B).